The following is a 448-amino-acid chain: Probable glycine dehydrogenase (decarboxylating) subunit 1 (448 aa).

It belongs to the GcvP family. N-terminal subunit subfamily. As to quaternary structure, the glycine cleavage system is composed of four proteins: P, T, L and H. In this organism, the P 'protein' is a heterodimer of two subunits.

It carries out the reaction N(6)-[(R)-lipoyl]-L-lysyl-[glycine-cleavage complex H protein] + glycine + H(+) = N(6)-[(R)-S(8)-aminomethyldihydrolipoyl]-L-lysyl-[glycine-cleavage complex H protein] + CO2. In terms of biological role, the glycine cleavage system catalyzes the degradation of glycine. The P protein binds the alpha-amino group of glycine through its pyridoxal phosphate cofactor; CO(2) is released and the remaining methylamine moiety is then transferred to the lipoamide cofactor of the H protein. This Listeria monocytogenes serotype 4b (strain F2365) protein is Probable glycine dehydrogenase (decarboxylating) subunit 1.